We begin with the raw amino-acid sequence, 1253 residues long: Pleckstrin homology-like domain family B member 2 (1253 aa).

Basic and acidic residues predominate over residues 1-12; that stretch reads MEEHSYIQKELD. Disordered regions lie at residues 1–43, 60–159, and 187–212; these read MEEH…PKKY, LTLS…KSHD, and DAGP…RKMS. Residues 29-43 show a composition bias toward polar residues; sequence NDSQNMMESLSPKKY. Residues serine 71 and serine 73 each carry the phosphoserine modification. Positions 74 to 96 are enriched in polar residues; that stretch reads PLGTSVRSSPSLAKIQGSKQFSY. The segment covering 126-144 has biased composition (basic and acidic residues); the sequence is ADFDHYTGRDSERALRLSE. Phosphoserine occurs at positions 157, 204, 212, 242, and 245. Positions 265–286 are disordered; the sequence is NQLTPLSLPPRNSLGNSKRTKL. 11 positions are modified to phosphoserine: serine 330, serine 334, serine 348, serine 351, serine 384, serine 387, serine 415, serine 420, serine 468, serine 489, and serine 501. Threonine 504 carries the post-translational modification Phosphothreonine. Serine 513 carries the phosphoserine modification. Positions 525–567 are disordered; sequence LSQSSASFFTPRSTRNDELLSDLTRTPPPPSSTFPKASSESSY. 2 positions are modified to phosphothreonine: threonine 550 and threonine 574. Coiled-coil stretches lie at residues 584–696 and 722–807; these read SQEL…LDNC and FEDL…LCNL. At threonine 898 the chain carries Phosphothreonine. A coiled-coil region spans residues 1032-1098; it reads IARIEEMERL…QKLIEKEVKI (67 aa). One can recognise a PH domain in the interval 1143–1246; the sequence is EKTCRGFLIK…WMDVIVTGAE (104 aa).

In terms of assembly, interacts with FLNC. Interacts with AMOTL2; interaction may facilitate PHLDB2 localization to the myotube podosome cortex that surrounds the core. Part of a cortical microtubule stabilization complex (CMSC) composed of KANK1, PPFIA1, PPFIBP1, ERC1/ELKS, PHLDB2/LL5beta, CLASPs, KIF21A and possibly additional interactors; within CMSCs KANK1 and PHLDB2/LL5beta appear to be the core components for targeting of microtubule-binding proteins KIF21A and CLASPs, whereas PPFIA1, PPFIBP1 and ERC1/ELKS serve as scaffolds for protein clustering.

It is found in the cytoplasm. The protein localises to the cell cortex. It localises to the membrane. The protein resides in the cell projection. Its subcellular location is the podosome. Functionally, seems to be involved in the assembly of the postsynaptic apparatus. May play a role in acetyl-choline receptor (AChR) aggregation in the postsynaptic membrane. The protein is Pleckstrin homology-like domain family B member 2 (PHLDB2) of Homo sapiens (Human).